The chain runs to 243 residues: Geranylgeranylglyceryl phosphate synthase (243 aa).

Residues Asp-22 and Ser-51 each coordinate Mg(2+). Sn-glycerol 1-phosphate-binding positions include 169–175, 200–201, and 222–223; these read YLEAGSG, GG, and GT.

Belongs to the GGGP/HepGP synthase family. Group II subfamily. The cofactor is Mg(2+).

It localises to the cytoplasm. It carries out the reaction sn-glycerol 1-phosphate + (2E,6E,10E)-geranylgeranyl diphosphate = sn-3-O-(geranylgeranyl)glycerol 1-phosphate + diphosphate. The protein operates within membrane lipid metabolism; glycerophospholipid metabolism. Functionally, prenyltransferase that catalyzes the transfer of the geranylgeranyl moiety of geranylgeranyl diphosphate (GGPP) to the C3 hydroxyl of sn-glycerol-1-phosphate (G1P). This reaction is the first ether-bond-formation step in the biosynthesis of archaeal membrane lipids. This is Geranylgeranylglyceryl phosphate synthase from Methanosphaera stadtmanae (strain ATCC 43021 / DSM 3091 / JCM 11832 / MCB-3).